The following is a 219-amino-acid chain: Chloramphenicol acetyltransferase (219 aa).

The active-site Proton acceptor is His190.

Belongs to the chloramphenicol acetyltransferase family. Homotrimer.

It catalyses the reaction chloramphenicol + acetyl-CoA = chloramphenicol 3-acetate + CoA. Functionally, this enzyme is an effector of chloramphenicol resistance in bacteria. The protein is Chloramphenicol acetyltransferase (catQ) of Clostridium perfringens.